The sequence spans 410 residues: Phosphopentomutase (410 aa).

Aspartate 10, aspartate 309, histidine 314, aspartate 350, histidine 351, and histidine 362 together coordinate Mn(2+).

Belongs to the phosphopentomutase family. The cofactor is Mn(2+).

The protein localises to the cytoplasm. The catalysed reaction is 2-deoxy-alpha-D-ribose 1-phosphate = 2-deoxy-D-ribose 5-phosphate. The enzyme catalyses alpha-D-ribose 1-phosphate = D-ribose 5-phosphate. It participates in carbohydrate degradation; 2-deoxy-D-ribose 1-phosphate degradation; D-glyceraldehyde 3-phosphate and acetaldehyde from 2-deoxy-alpha-D-ribose 1-phosphate: step 1/2. In terms of biological role, isomerase that catalyzes the conversion of deoxy-ribose 1-phosphate (dRib-1-P) and ribose 1-phosphate (Rib-1-P) to deoxy-ribose 5-phosphate (dRib-5-P) and ribose 5-phosphate (Rib-5-P), respectively. This chain is Phosphopentomutase, found in Aliivibrio fischeri (strain ATCC 700601 / ES114) (Vibrio fischeri).